The primary structure comprises 196 residues: Probable thymidylate kinase (196 aa).

7 to 14 serves as a coordination point for ATP; the sequence is GIDGSGKS.

The protein belongs to the thymidylate kinase family.

It carries out the reaction dTMP + ATP = dTDP + ADP. The polypeptide is Probable thymidylate kinase (Natronomonas pharaonis (strain ATCC 35678 / DSM 2160 / CIP 103997 / JCM 8858 / NBRC 14720 / NCIMB 2260 / Gabara) (Halobacterium pharaonis)).